A 187-amino-acid chain; its full sequence is Elongation factor P (187 aa).

This sequence belongs to the elongation factor P family.

It is found in the cytoplasm. It functions in the pathway protein biosynthesis; polypeptide chain elongation. In terms of biological role, involved in peptide bond synthesis. Stimulates efficient translation and peptide-bond synthesis on native or reconstituted 70S ribosomes in vitro. Probably functions indirectly by altering the affinity of the ribosome for aminoacyl-tRNA, thus increasing their reactivity as acceptors for peptidyl transferase. The protein is Elongation factor P of Mycobacterium avium (strain 104).